Reading from the N-terminus, the 274-residue chain is Rhamnulose-1-phosphate aldolase (274 aa).

Glu117 is a catalytic residue. The Zn(2+) site is built by His141, His143, and His212.

This sequence belongs to the aldolase class II family. RhaD subfamily. As to quaternary structure, homotetramer. The cofactor is Zn(2+).

The protein localises to the cytoplasm. It carries out the reaction L-rhamnulose 1-phosphate = (S)-lactaldehyde + dihydroxyacetone phosphate. It participates in carbohydrate degradation; L-rhamnose degradation; glycerone phosphate from L-rhamnose: step 3/3. Catalyzes the reversible cleavage of L-rhamnulose-1-phosphate to dihydroxyacetone phosphate (DHAP) and L-lactaldehyde. The sequence is that of Rhamnulose-1-phosphate aldolase from Pectobacterium atrosepticum (strain SCRI 1043 / ATCC BAA-672) (Erwinia carotovora subsp. atroseptica).